A 212-amino-acid polypeptide reads, in one-letter code: Eukaryotic translation initiation factor 4E-1 (212 aa).

A disulfide bond links cysteine 125 and cysteine 129.

This sequence belongs to the eukaryotic initiation factor 4E family. EIF4F is a multi-subunit complex, the composition of which varies with external and internal environmental conditions. It is composed of at least EIF4A, EIF4E and EIF4G. EIF4E is also known to interact with other partners, including pgl-1. Interacts with ifet-1. Enriched in the germline from L3 larvae to adults; regions of the gonad undergoing spermatogenesis. Expressed in germ granules (P granules); when associated with pgl-1.

The protein localises to the cytoplasm. In terms of biological role, recognizes and binds the 7-methylguanosine-containing mRNA cap during an early step in the initiation of protein synthesis and facilitates ribosome binding by inducing the unwinding of the mRNAs secondary structures. All 5 eIF4E proteins bind monomethyl cap structures. Only ife-1, ife-2 and ife-5 bind trimethyl cap structures which result from trans-splicing. Translation of trimethyl cap structure mRNAs may be regulated by intracellular redox state; disulfide bonds change the width and depth of the cap-binding cavity determining selectivity to mRNA caps. Required for progression through meiotic divisions during spermatogenesis and for the production of viable sperm. It is not required during oogenesis. This is Eukaryotic translation initiation factor 4E-1 (ife-1) from Caenorhabditis elegans.